A 270-amino-acid chain; its full sequence is tRNA pseudouridine synthase A (270 aa).

The active-site Nucleophile is Asp-60. The RNA binding stretch occupies residues Phe-107–Phe-111. Tyr-118 is a binding site for substrate. An interaction with tRNA region spans residues Gln-168–Arg-172.

It belongs to the tRNA pseudouridine synthase TruA family. In terms of assembly, homodimer.

It catalyses the reaction uridine(38/39/40) in tRNA = pseudouridine(38/39/40) in tRNA. Its function is as follows. Formation of pseudouridine at positions 38, 39 and 40 in the anticodon stem and loop of transfer RNAs. This Escherichia coli (strain K12 / DH10B) protein is tRNA pseudouridine synthase A.